Consider the following 239-residue polypeptide: Sugar fermentation stimulation protein homolog (239 aa).

The protein belongs to the SfsA family.

The chain is Sugar fermentation stimulation protein homolog from Agrobacterium fabrum (strain C58 / ATCC 33970) (Agrobacterium tumefaciens (strain C58)).